Consider the following 433-residue polypeptide: ATP-dependent RNA helicase SUB2 (433 aa).

A Q motif motif is present at residues 49 to 77; sequence TGFRDFLLKPELLRAIGDCGFEHPSEVQQ. The Helicase ATP-binding domain occupies 80–255; it reads IPQSILGTDV…KKFMQNPLEI (176 aa). Residue 93-100 participates in ATP binding; sequence AKSGLGKT. Positions 202–205 match the DEAD box motif; sequence DECD. Residues 267 to 428 enclose the Helicase C-terminal domain; the sequence is GLQQYYIKLE…EFPEEGVDPS (162 aa).

The protein belongs to the DEAD box helicase family. DECD subfamily.

Its subcellular location is the nucleus. The enzyme catalyses ATP + H2O = ADP + phosphate + H(+). In terms of biological role, ATP-binding RNA helicase involved in transcription elongation and required for the export of mRNA out of the nucleus. SUB2 also plays a role in pre-mRNA splicing and spliceosome assembly. May be involved in rDNA and telomeric silencing, and maintenance of genome integrity. This Scheffersomyces stipitis (strain ATCC 58785 / CBS 6054 / NBRC 10063 / NRRL Y-11545) (Yeast) protein is ATP-dependent RNA helicase SUB2 (SUB2).